A 320-amino-acid chain; its full sequence is o-succinylbenzoate synthase (320 aa).

Lys133 acts as the Proton donor in catalysis. 3 residues coordinate Mg(2+): Asp161, Glu190, and Asp213. Lys235 acts as the Proton acceptor in catalysis.

It belongs to the mandelate racemase/muconate lactonizing enzyme family. MenC type 1 subfamily. A divalent metal cation serves as cofactor.

It catalyses the reaction (1R,6R)-6-hydroxy-2-succinyl-cyclohexa-2,4-diene-1-carboxylate = 2-succinylbenzoate + H2O. It participates in quinol/quinone metabolism; 1,4-dihydroxy-2-naphthoate biosynthesis; 1,4-dihydroxy-2-naphthoate from chorismate: step 4/7. Its pathway is quinol/quinone metabolism; menaquinone biosynthesis. In terms of biological role, converts 2-succinyl-6-hydroxy-2,4-cyclohexadiene-1-carboxylate (SHCHC) to 2-succinylbenzoate (OSB). The protein is o-succinylbenzoate synthase of Escherichia coli O81 (strain ED1a).